We begin with the raw amino-acid sequence, 364 residues long: Histidinol-phosphate aminotransferase 2 (364 aa).

Lysine 223 is modified (N6-(pyridoxal phosphate)lysine).

The protein belongs to the class-II pyridoxal-phosphate-dependent aminotransferase family. Histidinol-phosphate aminotransferase subfamily. As to quaternary structure, homodimer. The cofactor is pyridoxal 5'-phosphate.

The enzyme catalyses L-histidinol phosphate + 2-oxoglutarate = 3-(imidazol-4-yl)-2-oxopropyl phosphate + L-glutamate. It functions in the pathway amino-acid biosynthesis; L-histidine biosynthesis; L-histidine from 5-phospho-alpha-D-ribose 1-diphosphate: step 7/9. In Oceanobacillus iheyensis (strain DSM 14371 / CIP 107618 / JCM 11309 / KCTC 3954 / HTE831), this protein is Histidinol-phosphate aminotransferase 2 (hisC2).